The following is a 218-amino-acid chain: Guanylate kinase (218 aa).

Positions Gly-15–Arg-194 constitute a Guanylate kinase-like domain. Residue Ser-22–Thr-29 coordinates ATP.

This sequence belongs to the guanylate kinase family.

It is found in the cytoplasm. The enzyme catalyses GMP + ATP = GDP + ADP. Functionally, essential for recycling GMP and indirectly, cGMP. The polypeptide is Guanylate kinase (Rhodospirillum rubrum (strain ATCC 11170 / ATH 1.1.1 / DSM 467 / LMG 4362 / NCIMB 8255 / S1)).